A 372-amino-acid polypeptide reads, in one-letter code: tRNA-specific 2-thiouridylase MnmA (372 aa).

ATP contacts are provided by residues 11–18 (GMSGGVDS) and methionine 37. The interval 97–99 (NPD) is interaction with target base in tRNA. The Nucleophile role is filled by cysteine 102. Cysteine 102 and cysteine 199 form a disulfide bridge. Residue glycine 126 coordinates ATP. The tract at residues 149 to 151 (KDQ) is interaction with tRNA. The active-site Cysteine persulfide intermediate is the cysteine 199. The segment at 309–310 (RY) is interaction with tRNA.

It belongs to the MnmA/TRMU family.

It is found in the cytoplasm. The catalysed reaction is S-sulfanyl-L-cysteinyl-[protein] + uridine(34) in tRNA + AH2 + ATP = 2-thiouridine(34) in tRNA + L-cysteinyl-[protein] + A + AMP + diphosphate + H(+). In terms of biological role, catalyzes the 2-thiolation of uridine at the wobble position (U34) of tRNA, leading to the formation of s(2)U34. The sequence is that of tRNA-specific 2-thiouridylase MnmA from Staphylococcus aureus (strain MSSA476).